We begin with the raw amino-acid sequence, 169 residues long: Gastrula zinc finger protein XlCGF62.1 (169 aa).

6 consecutive C2H2-type zinc fingers follow at residues 6-28, 34-56, 62-84, 90-113, 119-141, and 147-169; these read FICT…IRTH, FICT…YKTH, FICT…HRSH, FTCT…QAIH, FICT…KRTH, and FVCT…KRTH.

It belongs to the krueppel C2H2-type zinc-finger protein family.

It is found in the nucleus. May be involved in transcriptional regulation. This is Gastrula zinc finger protein XlCGF62.1 from Xenopus laevis (African clawed frog).